Consider the following 180-residue polypeptide: Inner membrane-spanning protein YciB (180 aa).

A run of 6 helical transmembrane segments spans residues 4–24, 25–45, 52–72, 76–96, 118–138, and 150–170; these read LLSEIGPVVAFFAGFFYGGGI, QSATLYMLITSVICITLCYII, LSIISTAVLLVSGIITLISGD, IKIKPTILYVIFGIIFLTSGI, ITLSYRTATFFFFMAIVNEIV, and FKVFGVVPITFVFILLQLPLL.

This sequence belongs to the YciB family.

Its subcellular location is the cell inner membrane. In terms of biological role, plays a role in cell envelope biogenesis, maintenance of cell envelope integrity and membrane homeostasis. The polypeptide is Inner membrane-spanning protein YciB (Rickettsia bellii (strain RML369-C)).